Reading from the N-terminus, the 428-residue chain is Adenylosuccinate synthetase (428 aa).

GTP contacts are provided by residues 12-18 and 40-42; these read GDEGKGK and GHT. Asp-13 (proton acceptor) is an active-site residue. Residues Asp-13 and Gly-40 each coordinate Mg(2+). Residues 13-16, 38-41, Thr-128, Arg-142, Gln-223, Thr-238, and Arg-302 each bind IMP; these read DEGK and NAGH. The Proton donor role is filled by His-41. Position 298-304 (298-304) interacts with substrate; that stretch reads TTTGRPR. Residues Arg-304, 330 to 332, and 412 to 414 contribute to the GTP site; these read SID and SVG.

This sequence belongs to the adenylosuccinate synthetase family. Homodimer. Mg(2+) is required as a cofactor.

The protein resides in the cytoplasm. The enzyme catalyses IMP + L-aspartate + GTP = N(6)-(1,2-dicarboxyethyl)-AMP + GDP + phosphate + 2 H(+). It participates in purine metabolism; AMP biosynthesis via de novo pathway; AMP from IMP: step 1/2. Functionally, plays an important role in the de novo pathway of purine nucleotide biosynthesis. Catalyzes the first committed step in the biosynthesis of AMP from IMP. The protein is Adenylosuccinate synthetase of Shouchella clausii (strain KSM-K16) (Alkalihalobacillus clausii).